Consider the following 135-residue polypeptide: UPF0355 protein SH2586 (135 aa).

The interval 105-135 (NSSHDEVEENNSAYEEIDITHYANESKGPKS) is disordered.

Belongs to the UPF0355 family.

This chain is UPF0355 protein SH2586, found in Staphylococcus haemolyticus (strain JCSC1435).